The chain runs to 381 residues: Succinyl-diaminopimelate desuccinylase (381 aa).

A Zn(2+)-binding site is contributed by His71. Asp73 is an active-site residue. Asp104 is a Zn(2+) binding site. The active-site Proton acceptor is the Glu138. Zn(2+) is bound by residues Glu139, Glu167, and His353.

The protein belongs to the peptidase M20A family. DapE subfamily. In terms of assembly, homodimer. Zn(2+) is required as a cofactor. Co(2+) serves as cofactor.

The catalysed reaction is N-succinyl-(2S,6S)-2,6-diaminopimelate + H2O = (2S,6S)-2,6-diaminopimelate + succinate. It functions in the pathway amino-acid biosynthesis; L-lysine biosynthesis via DAP pathway; LL-2,6-diaminopimelate from (S)-tetrahydrodipicolinate (succinylase route): step 3/3. In terms of biological role, catalyzes the hydrolysis of N-succinyl-L,L-diaminopimelic acid (SDAP), forming succinate and LL-2,6-diaminopimelate (DAP), an intermediate involved in the bacterial biosynthesis of lysine and meso-diaminopimelic acid, an essential component of bacterial cell walls. This Shewanella piezotolerans (strain WP3 / JCM 13877) protein is Succinyl-diaminopimelate desuccinylase.